We begin with the raw amino-acid sequence, 363 residues long: dTDP-3-amino-3,6-dideoxy-alpha-D-galactopyranose transaminase (363 aa).

Position 185 is an N6-(pyridoxal phosphate)lysine (K185).

This sequence belongs to the DegT/DnrJ/EryC1 family. Pyridoxal 5'-phosphate is required as a cofactor.

The enzyme catalyses dTDP-3-amino-3,6-dideoxy-alpha-D-galactopyranose + 2-oxoglutarate = dTDP-3-dehydro-6-deoxy-alpha-D-galactose + L-glutamate. In terms of biological role, specifically aminates dTDP-6-deoxy-D-xylohex-3-ulose to form dTDP-D-Fucp3N in the biosynthesis of dTDP-3-acetamido-3,6-dideoxy-alpha-D-galactose, a glycan chain of the S-layer. This is dTDP-3-amino-3,6-dideoxy-alpha-D-galactopyranose transaminase (fdtB) from Aneurinibacillus thermoaerophilus.